Reading from the N-terminus, the 353-residue chain is Tectonin-2 (353 aa).

The Ricin B-type lectin domain maps to 44–93 (WIFDNDGYIRLAANHNLVLDVNGGAAKEGNTVLSYPDKKDHAKNQLWVNK). Tandem repeats lie at residues 138-173 (SAWE…HWDG), 174-210 (SKWH…DRGT), 211-247 (NKWS…NADS), 248-282 (NSWT…HYNG), 283-318 (NSWD…LKHG), and 319-353 (KDWE…KALL). Residues 138–353 (SAWERHEGEL…SAHNIYKALL (216 aa)) are 6 X approximate tandem repeats.

It belongs to the tectonin family.

It is found in the cell surface. Its subcellular location is the cytoplasmic vesicle membrane. Probably involved in bacterial recognition. May be a lectin that function as part of a transmembrane signaling complex during phagocytosis. This chain is Tectonin-2 (TECB), found in Physarum polycephalum (Slime mold).